The chain runs to 424 residues: Serine--tRNA ligase (424 aa).

233–235 (TAE) is an L-serine binding site. Residue 264 to 266 (RKE) participates in ATP binding. L-serine is bound at residue glutamate 287. Position 351-354 (351-354 (EISS)) interacts with ATP. Serine 386 provides a ligand contact to L-serine.

This sequence belongs to the class-II aminoacyl-tRNA synthetase family. Type-1 seryl-tRNA synthetase subfamily. As to quaternary structure, homodimer. The tRNA molecule binds across the dimer.

Its subcellular location is the cytoplasm. The catalysed reaction is tRNA(Ser) + L-serine + ATP = L-seryl-tRNA(Ser) + AMP + diphosphate + H(+). It catalyses the reaction tRNA(Sec) + L-serine + ATP = L-seryl-tRNA(Sec) + AMP + diphosphate + H(+). The protein operates within aminoacyl-tRNA biosynthesis; selenocysteinyl-tRNA(Sec) biosynthesis; L-seryl-tRNA(Sec) from L-serine and tRNA(Sec): step 1/1. Functionally, catalyzes the attachment of serine to tRNA(Ser). Is also able to aminoacylate tRNA(Sec) with serine, to form the misacylated tRNA L-seryl-tRNA(Sec), which will be further converted into selenocysteinyl-tRNA(Sec). The polypeptide is Serine--tRNA ligase (Elusimicrobium minutum (strain Pei191)).